Here is a 148-residue protein sequence, read N- to C-terminus: Multiprotein-bridging factor 1c (148 aa).

Residues 91–145 (IQKARLEKKMSQADLAKQINERTQVVQEYENGKAVPNQAVLAKMEKVLGVKLRGK) enclose the HTH cro/C1-type domain. Positions 102–121 (QADLAKQINERTQVVQEYEN) form a DNA-binding region, H-T-H motif.

It belongs to the MBF1 family. In terms of assembly, binds to TPS5. In terms of tissue distribution, expressed in leaves, roots, stems, flowers, siliques and shoots. Not detected in seeds.

Its subcellular location is the nucleus. The protein localises to the nucleolus. It localises to the cytoplasm. Its function is as follows. Transcriptional coactivator that stimulates transcriptional activity by bridging regulatory proteins and TBP, thereby recruiting TBP to promoters occupied by DNA-binding regulators. Involved in the tolerance to heat and osmotic stress by partially activating the ethylene-response signal transduction pathway. The polypeptide is Multiprotein-bridging factor 1c (MBF1C) (Arabidopsis thaliana (Mouse-ear cress)).